We begin with the raw amino-acid sequence, 314 residues long: ATP synthase gamma chain (314 aa).

It belongs to the ATPase gamma chain family. F-type ATPases have 2 components, CF(1) - the catalytic core - and CF(0) - the membrane proton channel. CF(1) has five subunits: alpha(3), beta(3), gamma(1), delta(1), epsilon(1). CF(0) has three main subunits: a, b and c.

Its subcellular location is the cellular thylakoid membrane. In terms of biological role, produces ATP from ADP in the presence of a proton gradient across the membrane. The gamma chain is believed to be important in regulating ATPase activity and the flow of protons through the CF(0) complex. The polypeptide is ATP synthase gamma chain (Gloeothece citriformis (strain PCC 7424) (Cyanothece sp. (strain PCC 7424))).